The sequence spans 1036 residues: Non-canonical non-ribosomal peptide synthetase FUB8 (1036 aa).

The adenylation (A) domain stretch occupies residues 21–343; that stretch reads EIARDEPDRV…LASVVTHPDE (323 aa). The Carrier domain maps to 544-621; the sequence is TTEDVVRSGI…QLAHTVWSHL (78 aa). Position 579 is an O-(pantetheine 4'-phosphoryl)serine (S579). The segment at 658 to 899 is thioester reductase (TR) domain; the sequence is LTGTTGEIGS…IPIDLLTEVI (242 aa).

The protein operates within mycotoxin biosynthesis. Non-canonical non-ribosomal peptide synthetase; part of the gene cluster that mediates the biosynthesis of fusaric acid, a mycotoxin with low to moderate toxicity to animals and humans, but with high phytotoxic properties. L-aspartate is suggested as fusaric acid amino acid precursor that is activated and further processed to O-acetyl-L-homoserine by cluster enzymes aspartate kinase FUB3 and homoserine O-acetyltransferase FUB5, as well as enzymes of the primary metabolism. The polyketide synthase (PKS) FUB1 generates the triketide trans-2-hexenal which is presumptively released by the hydrolase FUB4 and linked to the NRPS-bound amino acid precursor by NAD(P)-dependent dehydrogenase FUB6. FUB1, FUB4, and the non-canonical NRPS Fub8 may form an enzyme complex. Further processing of the NRPS-bound intermediate might be carried out by FUB6 and the sulfhydrylase FUB7, enabling a spontaneous electrocyclization to close the carbon backbone of fusaric acid. Dihydrofusaric acid is likely to be released via reduction by the thioester reductase (TR) domain of FUB8 whereupon the final oxidation to fusaric acid may (also) be performed by the FMN-dependent dehydrogenase FUB9. The chain is Non-canonical non-ribosomal peptide synthetase FUB8 from Fusarium oxysporum f. sp. lycopersici (strain 4287 / CBS 123668 / FGSC 9935 / NRRL 34936) (Fusarium vascular wilt of tomato).